The sequence spans 48 residues: DCASGPCCRDCKFLEEFTICNMARGDDMNDYCNGKTCDCPRNPHKWPA.

One can recognise a Disintegrin domain in the interval 1–47; that stretch reads DCASGPCCRDCKFLEEFTICNMARGDDMNDYCNGKTCDCPRNPHKWP. Cystine bridges form between C2–C11, C7–C32, C8–C37, and C20–C39. Positions 24–26 match the Cell attachment site motif; that stretch reads RGD.

The protein belongs to the venom metalloproteinase (M12B) family. P-II subfamily. P-IIa sub-subfamily. Monomer (disintegrin). Expressed by the venom gland.

The protein localises to the secreted. Its function is as follows. Inhibits ADP-induced human platelet aggregation. The protein is Disintegrin leucogastin-A of Echis leucogaster (Roman's saw-scaled viper).